A 99-amino-acid polypeptide reads, in one-letter code: Aspartyl/glutamyl-tRNA(Asn/Gln) amidotransferase subunit C (99 aa).

It belongs to the GatC family. Heterotrimer of A, B and C subunits.

It carries out the reaction L-glutamyl-tRNA(Gln) + L-glutamine + ATP + H2O = L-glutaminyl-tRNA(Gln) + L-glutamate + ADP + phosphate + H(+). It catalyses the reaction L-aspartyl-tRNA(Asn) + L-glutamine + ATP + H2O = L-asparaginyl-tRNA(Asn) + L-glutamate + ADP + phosphate + 2 H(+). In terms of biological role, allows the formation of correctly charged Asn-tRNA(Asn) or Gln-tRNA(Gln) through the transamidation of misacylated Asp-tRNA(Asn) or Glu-tRNA(Gln) in organisms which lack either or both of asparaginyl-tRNA or glutaminyl-tRNA synthetases. The reaction takes place in the presence of glutamine and ATP through an activated phospho-Asp-tRNA(Asn) or phospho-Glu-tRNA(Gln). In Mycobacterium leprae (strain Br4923), this protein is Aspartyl/glutamyl-tRNA(Asn/Gln) amidotransferase subunit C.